We begin with the raw amino-acid sequence, 120 residues long: Glycine cleavage system H protein (120 aa).

One can recognise a Lipoyl-binding domain in the interval D19–E101. N6-lipoyllysine is present on K60.

This sequence belongs to the GcvH family. As to quaternary structure, the glycine cleavage system is composed of four proteins: P, T, L and H. The cofactor is (R)-lipoate.

In terms of biological role, the glycine cleavage system catalyzes the degradation of glycine. The H protein shuttles the methylamine group of glycine from the P protein to the T protein. This is Glycine cleavage system H protein from Deinococcus deserti (strain DSM 17065 / CIP 109153 / LMG 22923 / VCD115).